The sequence spans 540 residues: Chaperonin GroEL (540 aa).

ATP is bound by residues 29–32 (TLGP), 86–90 (DGTTT), Gly413, 477–479 (DAL), and Asp493.

The protein belongs to the chaperonin (HSP60) family. Forms a cylinder of 14 subunits composed of two heptameric rings stacked back-to-back. Interacts with the co-chaperonin GroES.

It localises to the cytoplasm. It catalyses the reaction ATP + H2O + a folded polypeptide = ADP + phosphate + an unfolded polypeptide.. In terms of biological role, together with its co-chaperonin GroES, plays an essential role in assisting protein folding. The GroEL-GroES system forms a nano-cage that allows encapsulation of the non-native substrate proteins and provides a physical environment optimized to promote and accelerate protein folding. This Clostridium botulinum (strain Alaska E43 / Type E3) protein is Chaperonin GroEL.